The primary structure comprises 200 residues: Dipicolinate synthase subunit B (200 aa).

As to quaternary structure, dipicolinate synthase likely consists of DpaA and DpaB, since both proteins are required for DPA synthesis.

The catalysed reaction is (S)-2,3-dihydrodipicolinate + NADP(+) = dipicolinate + NADPH + H(+). Together with DpaA, catalyzes the conversion of dihydrodipicolinate to dipicolinate (DPA), which constitutes up to 10% of the dry weight of the spore. This chain is Dipicolinate synthase subunit B (dpaB), found in Bacillus subtilis (strain 168).